The following is a 229-amino-acid chain: Adenosylcobinamide-GDP ribazoletransferase (229 aa).

6 helical membrane-spanning segments follow: residues 31 to 51 (AMLL…AVLA), 55 to 75 (AVEL…AASS), 111 to 131 (AGVL…ATLL), 134 to 154 (PLLA…VCCT), 176 to 196 (VAVL…LVLV), and 208 to 228 (GDVM…AWAA).

It belongs to the CobS family. Mg(2+) serves as cofactor.

It localises to the cell membrane. It catalyses the reaction alpha-ribazole + adenosylcob(III)inamide-GDP = adenosylcob(III)alamin + GMP + H(+). The enzyme catalyses alpha-ribazole 5'-phosphate + adenosylcob(III)inamide-GDP = adenosylcob(III)alamin 5'-phosphate + GMP + H(+). The protein operates within cofactor biosynthesis; adenosylcobalamin biosynthesis; adenosylcobalamin from cob(II)yrinate a,c-diamide: step 7/7. Its function is as follows. Joins adenosylcobinamide-GDP and alpha-ribazole to generate adenosylcobalamin (Ado-cobalamin). Also synthesizes adenosylcobalamin 5'-phosphate from adenosylcobinamide-GDP and alpha-ribazole 5'-phosphate. The polypeptide is Adenosylcobinamide-GDP ribazoletransferase (Nocardioides sp. (strain ATCC BAA-499 / JS614)).